The sequence spans 338 residues: Methionine import ATP-binding protein MetN 1 (338 aa).

One can recognise an ABC transporter domain in the interval 2 to 241; sequence IELHQVSKSF…AKHATTKRFV (240 aa). An ATP-binding site is contributed by 38 to 45; that stretch reads GYSGAGKS.

It belongs to the ABC transporter superfamily. Methionine importer (TC 3.A.1.24) family. In terms of assembly, the complex is composed of two ATP-binding proteins (MetN), two transmembrane proteins (MetI) and a solute-binding protein (MetQ).

It localises to the cell membrane. The catalysed reaction is L-methionine(out) + ATP + H2O = L-methionine(in) + ADP + phosphate + H(+). It carries out the reaction D-methionine(out) + ATP + H2O = D-methionine(in) + ADP + phosphate + H(+). Part of the ABC transporter complex MetNIQ involved in methionine import. Responsible for energy coupling to the transport system. This chain is Methionine import ATP-binding protein MetN 1, found in Listeria monocytogenes serotype 4b (strain F2365).